A 291-amino-acid chain; its full sequence is Pantothenate synthetase (291 aa).

30–37 (MGYLHVGH) is an ATP binding site. H37 acts as the Proton donor in catalysis. Q61 contacts (R)-pantoate. Q61 contributes to the beta-alanine binding site. 147–150 (GEKD) serves as a coordination point for ATP. Residue Q153 coordinates (R)-pantoate. ATP-binding positions include V176 and 184 to 187 (CSSR).

Belongs to the pantothenate synthetase family. In terms of assembly, homodimer.

It localises to the cytoplasm. The catalysed reaction is (R)-pantoate + beta-alanine + ATP = (R)-pantothenate + AMP + diphosphate + H(+). It participates in cofactor biosynthesis; (R)-pantothenate biosynthesis; (R)-pantothenate from (R)-pantoate and beta-alanine: step 1/1. Catalyzes the condensation of pantoate with beta-alanine in an ATP-dependent reaction via a pantoyl-adenylate intermediate. The protein is Pantothenate synthetase of Sinorhizobium medicae (strain WSM419) (Ensifer medicae).